The chain runs to 146 residues: Deoxyuridine 5'-triphosphate nucleotidohydrolase (146 aa).

Residues 60–62 (RSG), Asn-73, and 77–79 (VID) contribute to the substrate site.

Belongs to the dUTPase family. Requires Mg(2+) as cofactor.

It catalyses the reaction dUTP + H2O = dUMP + diphosphate + H(+). It participates in pyrimidine metabolism; dUMP biosynthesis; dUMP from dCTP (dUTP route): step 2/2. Its function is as follows. This enzyme is involved in nucleotide metabolism: it produces dUMP, the immediate precursor of thymidine nucleotides and it decreases the intracellular concentration of dUTP so that uracil cannot be incorporated into DNA. In Tropheryma whipplei (strain TW08/27) (Whipple's bacillus), this protein is Deoxyuridine 5'-triphosphate nucleotidohydrolase.